Here is an 83-residue protein sequence, read N- to C-terminus: MKLTCVVIVAVLFLTAWTFVTADDSRYGLKNLFPKARHEMKNPEASKLNKRDECYPPGTFCGIKPGLCCSERCFPFVCLSLEF.

An N-terminal signal peptide occupies residues 1-22; the sequence is MKLTCVVIVAVLFLTAWTFVTA. Residues 23 to 51 constitute a propeptide that is removed on maturation; that stretch reads DDSRYGLKNLFPKARHEMKNPEASKLNKR. Cystine bridges form between C54-C69, C61-C73, and C68-C78. A 4-hydroxyproline mark is found at P57 and P65.

This sequence belongs to the conotoxin O1 superfamily. As to expression, expressed by the venom duct.

It is found in the secreted. Its function is as follows. Delta-conotoxins bind to site 6 of voltage-gated sodium channels (Nav) and inhibit the inactivation process. This is Delta-conotoxin-like Ac6.2 from Conus achatinus (Little frog cone).